The primary structure comprises 317 residues: 4-hydroxy-3-methylbut-2-enyl diphosphate reductase (317 aa).

A [4Fe-4S] cluster-binding site is contributed by C12. (2E)-4-hydroxy-3-methylbut-2-enyl diphosphate-binding residues include H41 and H74. H41 and H74 together coordinate dimethylallyl diphosphate. Isopentenyl diphosphate-binding residues include H41 and H74. C97 lines the [4Fe-4S] cluster pocket. H125 is a binding site for (2E)-4-hydroxy-3-methylbut-2-enyl diphosphate. H125 contributes to the dimethylallyl diphosphate binding site. Isopentenyl diphosphate is bound at residue H125. E127 functions as the Proton donor in the catalytic mechanism. T168 is a binding site for (2E)-4-hydroxy-3-methylbut-2-enyl diphosphate. C198 provides a ligand contact to [4Fe-4S] cluster. 4 residues coordinate (2E)-4-hydroxy-3-methylbut-2-enyl diphosphate: S226, S227, N228, and S270. S226, S227, N228, and S270 together coordinate dimethylallyl diphosphate. Residues S226, S227, N228, and S270 each coordinate isopentenyl diphosphate.

It belongs to the IspH family. Homodimer. Requires [4Fe-4S] cluster as cofactor.

It carries out the reaction isopentenyl diphosphate + 2 oxidized [2Fe-2S]-[ferredoxin] + H2O = (2E)-4-hydroxy-3-methylbut-2-enyl diphosphate + 2 reduced [2Fe-2S]-[ferredoxin] + 2 H(+). The catalysed reaction is dimethylallyl diphosphate + 2 oxidized [2Fe-2S]-[ferredoxin] + H2O = (2E)-4-hydroxy-3-methylbut-2-enyl diphosphate + 2 reduced [2Fe-2S]-[ferredoxin] + 2 H(+). It participates in isoprenoid biosynthesis; dimethylallyl diphosphate biosynthesis; dimethylallyl diphosphate from (2E)-4-hydroxy-3-methylbutenyl diphosphate: step 1/1. Its pathway is isoprenoid biosynthesis; isopentenyl diphosphate biosynthesis via DXP pathway; isopentenyl diphosphate from 1-deoxy-D-xylulose 5-phosphate: step 6/6. Catalyzes the conversion of 1-hydroxy-2-methyl-2-(E)-butenyl 4-diphosphate (HMBPP) into a mixture of isopentenyl diphosphate (IPP) and dimethylallyl diphosphate (DMAPP). Acts in the terminal step of the DOXP/MEP pathway for isoprenoid precursor biosynthesis. In Proteus mirabilis (strain HI4320), this protein is 4-hydroxy-3-methylbut-2-enyl diphosphate reductase.